The primary structure comprises 256 residues: Deoxyribose-phosphate aldolase (256 aa).

The active-site Proton donor/acceptor is Asp-102. The active-site Schiff-base intermediate with acetaldehyde is the Lys-165. Catalysis depends on Lys-197, which acts as the Proton donor/acceptor.

This sequence belongs to the DeoC/FbaB aldolase family. DeoC type 2 subfamily.

Its subcellular location is the cytoplasm. It catalyses the reaction 2-deoxy-D-ribose 5-phosphate = D-glyceraldehyde 3-phosphate + acetaldehyde. Its pathway is carbohydrate degradation; 2-deoxy-D-ribose 1-phosphate degradation; D-glyceraldehyde 3-phosphate and acetaldehyde from 2-deoxy-alpha-D-ribose 1-phosphate: step 2/2. Its function is as follows. Catalyzes a reversible aldol reaction between acetaldehyde and D-glyceraldehyde 3-phosphate to generate 2-deoxy-D-ribose 5-phosphate. This is Deoxyribose-phosphate aldolase from Shewanella baltica (strain OS223).